We begin with the raw amino-acid sequence, 237 residues long: Orotidine 5'-phosphate decarboxylase (237 aa).

Residues Asp-17, Lys-39, 66–75, Thr-121, Arg-182, Gln-191, Gly-211, and Arg-212 each bind substrate; that span reads DLKLHDIGNT. The active-site Proton donor is the Lys-68.

The protein belongs to the OMP decarboxylase family. Type 1 subfamily. Homodimer.

It carries out the reaction orotidine 5'-phosphate + H(+) = UMP + CO2. It functions in the pathway pyrimidine metabolism; UMP biosynthesis via de novo pathway; UMP from orotate: step 2/2. Functionally, catalyzes the decarboxylation of orotidine 5'-monophosphate (OMP) to uridine 5'-monophosphate (UMP). In Rhodopseudomonas palustris (strain TIE-1), this protein is Orotidine 5'-phosphate decarboxylase.